Consider the following 560-residue polypeptide: Membrane protein insertase YidC (560 aa).

6 consecutive transmembrane segments (helical) span residues 5 to 25, 334 to 354, 357 to 377, 431 to 451, 476 to 496, and 522 to 542; these read IINLVAAIILSLSIIFGWQYF, AIDFGWFYIITKPVFYAMNFF, YVGNFGVSILIVTVIIKLLMF, LPILVQIPVFFSIYKVLYVTI, LFGLLPFSPPSFLMIGAWPIL, and FMPLIFLFMFSSFPVGLLIYW.

The protein belongs to the OXA1/ALB3/YidC family. Type 1 subfamily. In terms of assembly, interacts with the Sec translocase complex via SecD. Specifically interacts with transmembrane segments of nascent integral membrane proteins during membrane integration.

The protein resides in the cell inner membrane. Functionally, required for the insertion and/or proper folding and/or complex formation of integral membrane proteins into the membrane. Involved in integration of membrane proteins that insert both dependently and independently of the Sec translocase complex, as well as at least some lipoproteins. Aids folding of multispanning membrane proteins. This is Membrane protein insertase YidC from Rickettsia massiliae (strain Mtu5).